A 167-amino-acid chain; its full sequence is Transcription initiation factor TFIID subunit 10 (167 aa).

Disordered regions lie at residues 1–56 (MASD…EESE) and 119–139 (TTNI…NPKD). Residues 41-56 (EQPDVEEVPLTTEESE) are compositionally biased toward acidic residues. The segment covering 130-139 (SSKDKKNPKD) has biased composition (basic and acidic residues).

It belongs to the TAF10 family. Belongs to the TFIID complex which is composed of TATA binding protein (Tbp) and a number of TBP-associated factors (TAFs). Also a member of the histone acetylase (HAT) complex. As to expression, at embryonic stage 9, highest expression is detected within the ectoderm, ventral chord, and anterior foregut primordium. Later in development preferential expression is in the foregut, proventriculus, and central nervous system. Coexpressed with Taf10b in the lateral epidermis and anal plate.

The protein resides in the cytoplasm. It is found in the nucleus. Its function is as follows. TFIID is a multimeric protein complex that plays a central role in mediating promoter responses to various activators and repressors. In Drosophila melanogaster (Fruit fly), this protein is Transcription initiation factor TFIID subunit 10.